The primary structure comprises 464 residues: ATP synthase subunit beta (464 aa).

G151–T158 contacts ATP.

It belongs to the ATPase alpha/beta chains family. F-type ATPases have 2 components, CF(1) - the catalytic core - and CF(0) - the membrane proton channel. CF(1) has five subunits: alpha(3), beta(3), gamma(1), delta(1), epsilon(1). CF(0) has three main subunits: a(1), b(2) and c(9-12). The alpha and beta chains form an alternating ring which encloses part of the gamma chain. CF(1) is attached to CF(0) by a central stalk formed by the gamma and epsilon chains, while a peripheral stalk is formed by the delta and b chains.

The protein resides in the cell membrane. The catalysed reaction is ATP + H2O + 4 H(+)(in) = ADP + phosphate + 5 H(+)(out). Produces ATP from ADP in the presence of a proton gradient across the membrane. The catalytic sites are hosted primarily by the beta subunits. This Bacillus cytotoxicus (strain DSM 22905 / CIP 110041 / 391-98 / NVH 391-98) protein is ATP synthase subunit beta.